The sequence spans 438 residues: MSTTKVKRRVGKYELGRTIGEGTFAKVKFARDTETGDPVAIKILDKEKVLKHKMVEQIKREISTMKLIKHPNVVRIYEVMGSKTKIYIVLEYVTGGELFDTIVNHGRMREDEARRYFQQLINAVDYCHSRGVYHRDLKPENLLLDSYGNLKVSDFGLSALSQQIKDDGLLHTTCGTPNYVAPEVLEDQGYDGAMADLWSCGVILFVLLAGYLPFEDSNLMTLYKKISNAEFTFPPWTSFPAKRLLTRILDPNPMTRVTIPEILEDEWFKKGYKRPEFDEKYDTTLDDVYAVFNDSEEHHVTEKKEEPEALNAFELISMSAGLNLGNLFDSEQEFKRETRFTSKCPPKEIVRKIEEAAKPLGFDVQKKNYKLRLEKVKAGRKGNLNVATEILQVAPSLHMVEVRKAKGDTLEFHKFYKNLSRTLKDVVWKSDDLQNQLS.

One can recognise a Protein kinase domain in the interval tyrosine 13 to phenylalanine 268. ATP-binding positions include isoleucine 19–valine 27 and lysine 42. The active-site Proton acceptor is the aspartate 136. The segment at aspartate 154–glutamate 183 is activation loop. The 25-residue stretch at glutamate 305–aspartate 329 folds into the NAF domain. The PPI stretch occupies residues lysine 335–valine 364.

It belongs to the protein kinase superfamily. CAMK Ser/Thr protein kinase family. SNF1 subfamily. The cofactor is Mn(2+).

The catalysed reaction is L-seryl-[protein] + ATP = O-phospho-L-seryl-[protein] + ADP + H(+). It carries out the reaction L-threonyl-[protein] + ATP = O-phospho-L-threonyl-[protein] + ADP + H(+). CIPK serine-threonine protein kinases interact with CBL proteins. Binding of a CBL protein to the regulatory NAF domain of CIPK protein lead to the activation of the kinase in a calcium-dependent manner. The chain is CBL-interacting protein kinase 32 (CIPK32) from Oryza sativa subsp. japonica (Rice).